A 692-amino-acid polypeptide reads, in one-letter code: NAD(P)H-quinone oxidoreductase subunit 5, chloroplastic (692 aa).

A run of 17 helical transmembrane segments spans residues Trp-9–Phe-29, Leu-39–Phe-59, Leu-89–Ile-109, Gly-120–Leu-140, Val-147–Thr-167, Ile-184–Asp-204, Asn-219–Ala-239, Thr-258–Ala-278, Phe-289–Ala-309, Leu-327–Ile-347, Ala-354–His-374, Ala-395–Trp-415, Trp-425–Tyr-445, Leu-503–Phe-523, Phe-555–Tyr-575, Trp-643–Leu-663, and Ile-671–Ile-691.

Belongs to the complex I subunit 5 family. NDH is composed of at least 16 different subunits, 5 of which are encoded in the nucleus.

Its subcellular location is the plastid. The protein resides in the chloroplast thylakoid membrane. It carries out the reaction a plastoquinone + NADH + (n+1) H(+)(in) = a plastoquinol + NAD(+) + n H(+)(out). The catalysed reaction is a plastoquinone + NADPH + (n+1) H(+)(in) = a plastoquinol + NADP(+) + n H(+)(out). In terms of biological role, NDH shuttles electrons from NAD(P)H:plastoquinone, via FMN and iron-sulfur (Fe-S) centers, to quinones in the photosynthetic chain and possibly in a chloroplast respiratory chain. The immediate electron acceptor for the enzyme in this species is believed to be plastoquinone. Couples the redox reaction to proton translocation, and thus conserves the redox energy in a proton gradient. This Marchantia polymorpha (Common liverwort) protein is NAD(P)H-quinone oxidoreductase subunit 5, chloroplastic (ndhF).